The following is a 159-amino-acid chain: Phosphopantetheine adenylyltransferase (159 aa).

Ser-9 is a substrate binding site. ATP contacts are provided by residues 9-10 (SF) and His-17. Lys-41, Ile-75, and Lys-89 together coordinate substrate. Residues 90 to 92 (GLR), Glu-100, and 124 to 130 (LEHISSS) each bind ATP.

Belongs to the bacterial CoaD family. As to quaternary structure, homohexamer. Mg(2+) serves as cofactor.

It localises to the cytoplasm. The catalysed reaction is (R)-4'-phosphopantetheine + ATP + H(+) = 3'-dephospho-CoA + diphosphate. The protein operates within cofactor biosynthesis; coenzyme A biosynthesis; CoA from (R)-pantothenate: step 4/5. In terms of biological role, reversibly transfers an adenylyl group from ATP to 4'-phosphopantetheine, yielding dephospho-CoA (dPCoA) and pyrophosphate. This chain is Phosphopantetheine adenylyltransferase, found in Bifidobacterium animalis subsp. lactis (strain AD011).